The following is a 129-amino-acid chain: Serum amyloid A-1 protein (129 aa).

The signal sequence occupies residues 1–18 (MKLFTGLIFCSLVLGVSS). Residues 19–44 (QWYSFIGEAAQGAWDMYRAYSDMIEA) form an important for amyloid formation region. Residues 92–129 (GDSGHGVEDSKADQAANEWGRSGKDPNHFRPPGLPDKY) form a disordered region.

The protein belongs to the SAA family. Homohexamer; dimer of trimers. Can form amyloid fibrils after partial proteolysis; the native, undenatured protein does not form amyloid fibrils (in vitro). Apolipoprotein of the HDL complex. Binds to heparin. Detected in liver.

The protein resides in the secreted. In terms of biological role, major acute phase protein. The sequence is that of Serum amyloid A-1 protein (SAA1) from Neovison vison (American mink).